The primary structure comprises 339 residues: Transmembrane protein 120B (339 aa).

Positions 1–77 (MSGQLERCER…ASREEAELVQ (77 aa)) form a coiled coil. A run of 6 helical transmembrane segments spans residues 102 to 124 (GLYL…AKFA), 132 to 152 (FKLY…FVLH), 159 to 179 (VFNF…SILI), 187 to 207 (GWWV…LTWP), 270 to 290 (FLLP…VTLF), and 302 to 322 (QVFV…LTTL).

It belongs to the TMEM120 family. Heterooligomer with TMEM120A.

The protein resides in the nucleus inner membrane. Functionally, necessary for efficient adipogenesis. Does not show ion channel activity. This Homo sapiens (Human) protein is Transmembrane protein 120B.